The chain runs to 597 residues: uncharacterized protein (597 aa).

Disordered stretches follow at residues 165 to 197 (NSRAVPPPAPPNPPKMEKHMSHDTSGRGSIFSK) and 278 to 344 (ERSS…RGTL). Pro residues predominate over residues 169-178 (VPPPAPPNPP). Residues 179 to 189 (KMEKHMSHDTS) show a composition bias toward basic and acidic residues. Low complexity predominate over residues 293-313 (STEVSITSSSPSPSSSSSTST). Residues 402-465 (WSLDDVLLWL…LDDLSKIIEN (64 aa)) enclose the SAM domain. The segment at 576-597 (EESQQKESSSSGISSSPQTPTE) is disordered. A compositionally biased stretch (low complexity) spans 581–597 (KESSSSGISSSPQTPTE).

This is an uncharacterized protein from Caenorhabditis elegans.